A 142-amino-acid polypeptide reads, in one-letter code: Semaphorin-like protein VACWR164 (142 aa).

The region spanning Met-1–Met-142 is the Sema domain.

Belongs to the semaphorin family.

The chain is Semaphorin-like protein VACWR164 from Bos taurus (Bovine).